Consider the following 395-residue polypeptide: Ankyrin repeat domain-containing protein 65 (395 aa).

ANK repeat units follow at residues 52 to 81 (QAWGHLLQAVWKGHTGLVTQLLRQGASVEE), 85 to 114 (AGRTPLHLAVLRGHVSLVRLLLQRGAQVGA), 118 to 147 (AGRTPLHEAAWHGPSRVAELLLRRGAPANA), 151 to 180 (AGLTPLHWAAALGRTLMVGHLLAAPHPGPT), 185 to 212 (RGWTAGHWAAAGGQMAVLELLGANGGAR), 213 to 241 (LDSVLLVAAAAGRATALRLLLAQGAPVDA), 245 to 274 (VGATVLGVAAGLGRRQDMEVLLEHGADPSL), 278 to 307 (HGRSALHRAAAGGHLLAVQLLAAWGAEVDS), 311 to 340 (LGLTPLHHAARGGHIEVTGHLLDRGAEINA), and 344 to 373 (LHKTPLHLAMEHGHGPTAELLLSRGASPTL).

This is Ankyrin repeat domain-containing protein 65 (ANKRD65) from Bos taurus (Bovine).